A 420-amino-acid chain; its full sequence is Gamma-glutamyl phosphate reductase (420 aa).

This sequence belongs to the gamma-glutamyl phosphate reductase family.

It is found in the cytoplasm. The enzyme catalyses L-glutamate 5-semialdehyde + phosphate + NADP(+) = L-glutamyl 5-phosphate + NADPH + H(+). The protein operates within amino-acid biosynthesis; L-proline biosynthesis; L-glutamate 5-semialdehyde from L-glutamate: step 2/2. Functionally, catalyzes the NADPH-dependent reduction of L-glutamate 5-phosphate into L-glutamate 5-semialdehyde and phosphate. The product spontaneously undergoes cyclization to form 1-pyrroline-5-carboxylate. In Streptococcus pneumoniae serotype 19F (strain G54), this protein is Gamma-glutamyl phosphate reductase.